A 131-amino-acid chain; its full sequence is MFDGIGFMELLLIGIVGLVVLGPERLPTAVRSVSSWIRAMKKMANSVKDELEQELKIEQLHSDLKNAESQGLKNLSPELQDSINQLKEAAQSVNRPYQVEDVPAAKDVPAKEMPTSETSTATNANSDKPNG.

A helical transmembrane segment spans residues 2-22 (FDGIGFMELLLIGIVGLVVLG). The segment covering 86 to 95 (LKEAAQSVNR) has biased composition (polar residues). Residues 86–131 (LKEAAQSVNRPYQVEDVPAAKDVPAKEMPTSETSTATNANSDKPNG) form a disordered region. Positions 115-131 (TSETSTATNANSDKPNG) are enriched in low complexity.

The protein belongs to the TatB family. The Tat system comprises two distinct complexes: a TatABC complex, containing multiple copies of TatA, TatB and TatC subunits, and a separate TatA complex, containing only TatA subunits. Substrates initially bind to the TatABC complex, which probably triggers association of the separate TatA complex to form the active translocon.

The protein resides in the cell inner membrane. Part of the twin-arginine translocation (Tat) system that transports large folded proteins containing a characteristic twin-arginine motif in their signal peptide across membranes. Together with TatC, TatB is part of a receptor directly interacting with Tat signal peptides. TatB may form an oligomeric binding site that transiently accommodates folded Tat precursor proteins before their translocation. This Shewanella halifaxensis (strain HAW-EB4) protein is Sec-independent protein translocase protein TatB.